A 156-amino-acid polypeptide reads, in one-letter code: Prolamin PPROL 17D (156 aa).

Positions 1 to 19 (MKIIFFFALLAIAACSASA) are cleaved as a signal peptide. Q20 bears the Pyrrolidone carboxylic acid mark.

This sequence belongs to the prolamin family.

Its subcellular location is the vacuole. It localises to the aleurone grain. Seed storage protein; serves as a source of nitrogen, carbon and sulfur for the young developing seedling. This Oryza sativa subsp. japonica (Rice) protein is Prolamin PPROL 17D.